The chain runs to 346 residues: Rhomboid protein 1, mitochondrial (346 aa).

The N-terminal 73 residues, 1-73 (MSGVSSVMLG…RFFSQTSILK (73 aa)), are a transit peptide targeting the mitochondrion. 6 helical membrane-spanning segments follow: residues 109 to 129 (SMTILGLSLMAGIYFGSPYLF), 145 to 165 (LVYALLGINVAVFGLWQLPKC), 203 to 223 (MLALWSFGTSLATMLGASNFF), 246 to 266 (LAIVGPSLGASGALFGVLGCF), 275 to 295 (ILLFVFPVPGGAWVAFLASVA), and 308 to 328 (FDYAAHLGGSMMGVLYGWYIS). Serine 256 functions as the Nucleophile in the catalytic mechanism. The active site involves histidine 313.

This sequence belongs to the peptidase S54 family.

Its subcellular location is the mitochondrion inner membrane. The enzyme catalyses Cleaves type-1 transmembrane domains using a catalytic dyad composed of serine and histidine that are contributed by different transmembrane domains.. Mitochondrial rhomboid serine protease processing the mitochondrial membrane fusion regulator MGM1, and the cytochrome c peroxidase (CCP1). Required for TIM11 stability, ATP synthase complex assembly, mitochondrial morphology, cytochrome c (CYC1) storage and mitochondrial genome maintenance. The protein is Rhomboid protein 1, mitochondrial (PCP1) of Saccharomyces cerevisiae (strain ATCC 204508 / S288c) (Baker's yeast).